A 316-amino-acid polypeptide reads, in one-letter code: MLSESSSFLKGVMLGSIFCALITMLGHIRIGNRMHHHEHHHLQAPNKDDILKISETERMELSKSFQVYCIVLVKPKDVSLWAAVKETWTKHCDKAEFFSSENVKVFESINMDTNDMWLMMRKAYKYAYDKYKDQYNWFFLARPTTFAVIENLKYFLLRKDPSQPFYLGHTVKSGDLEYVSVDGGIVLSIESMKRLNGLLSVPEKCPEQGGMIWKISEDKQLAVCLKYAGVFAENAEDADGKDVFNTKSVGLFIKEAMTNQPNQVVEGCCSDMAVTFNGLTPNQMHVMMYGVYRLRAFGHVFNDALVFLPPNGSEND.

Over 1 to 6 the chain is Cytoplasmic; the sequence is MLSESS. Residues 7–26 form a helical; Signal-anchor for type II membrane protein membrane-spanning segment; that stretch reads SFLKGVMLGSIFCALITMLG. Over 27–316 the chain is Lumenal; that stretch reads HIRIGNRMHH…FLPPNGSEND (290 aa).

The protein belongs to the glycosyltransferase 31 family. Beta3-Gal-T subfamily. As to quaternary structure, associates with core 1 beta-3-galactosyltransferase (C1GALT1), probably not with the soluble active form.

The protein resides in the membrane. Its function is as follows. Probable chaperone required for the generation of 1 O-glycan Gal-beta1-3GalNAc-alpha1-Ser/Thr (T antigen), which is a precursor for many extended O-glycans in glycoproteins. Probably acts as a specific molecular chaperone assisting the folding/stability of core 1 beta-3-galactosyltransferase (C1GALT1). The polypeptide is C1GALT1-specific chaperone 1 (C1galt1c1) (Rattus norvegicus (Rat)).